Consider the following 938-residue polypeptide: Isoleucine--tRNA ligase (938 aa).

Residues 58-68 (PYANGSIHIGH) carry the 'HIGH' region motif. Glu561 lines the L-isoleucyl-5'-AMP pocket. The 'KMSKS' region motif lies at 602-606 (KMSKS). Lys605 provides a ligand contact to ATP. Zn(2+)-binding residues include Cys901, Cys904, Cys921, and Cys924.

It belongs to the class-I aminoacyl-tRNA synthetase family. IleS type 1 subfamily. In terms of assembly, monomer. Zn(2+) is required as a cofactor.

It localises to the cytoplasm. It catalyses the reaction tRNA(Ile) + L-isoleucine + ATP = L-isoleucyl-tRNA(Ile) + AMP + diphosphate. In terms of biological role, catalyzes the attachment of isoleucine to tRNA(Ile). As IleRS can inadvertently accommodate and process structurally similar amino acids such as valine, to avoid such errors it has two additional distinct tRNA(Ile)-dependent editing activities. One activity is designated as 'pretransfer' editing and involves the hydrolysis of activated Val-AMP. The other activity is designated 'posttransfer' editing and involves deacylation of mischarged Val-tRNA(Ile). The polypeptide is Isoleucine--tRNA ligase (Cronobacter sakazakii (strain ATCC BAA-894) (Enterobacter sakazakii)).